Reading from the N-terminus, the 369-residue chain is Glutamate 5-kinase (369 aa).

Lys11 serves as a coordination point for ATP. Substrate-binding residues include Ser51, Asp138, and Asn150. ATP is bound by residues 170-171 (TD) and 212-218 (TGGMATK). The PUA domain maps to 277-355 (NGTIVIDDGA…QDIYAVLGYE (79 aa)).

This sequence belongs to the glutamate 5-kinase family.

It is found in the cytoplasm. The enzyme catalyses L-glutamate + ATP = L-glutamyl 5-phosphate + ADP. It functions in the pathway amino-acid biosynthesis; L-proline biosynthesis; L-glutamate 5-semialdehyde from L-glutamate: step 1/2. Catalyzes the transfer of a phosphate group to glutamate to form L-glutamate 5-phosphate. In Aliivibrio salmonicida (strain LFI1238) (Vibrio salmonicida (strain LFI1238)), this protein is Glutamate 5-kinase.